Here is a 276-residue protein sequence, read N- to C-terminus: Diaminopimelate epimerase (276 aa).

Residues asparagine 13, glutamine 46, and asparagine 66 each coordinate substrate. The active-site Proton donor is cysteine 75. Substrate is bound by residues glycine 76–asparagine 77, asparagine 159, asparagine 192, and glutamate 210–arginine 211. The Proton acceptor role is filled by cysteine 219. Position 220 to 221 (glycine 220 to threonine 221) interacts with substrate.

It belongs to the diaminopimelate epimerase family. In terms of assembly, homodimer.

Its subcellular location is the cytoplasm. It carries out the reaction (2S,6S)-2,6-diaminopimelate = meso-2,6-diaminopimelate. It participates in amino-acid biosynthesis; L-lysine biosynthesis via DAP pathway; DL-2,6-diaminopimelate from LL-2,6-diaminopimelate: step 1/1. Its function is as follows. Catalyzes the stereoinversion of LL-2,6-diaminopimelate (L,L-DAP) to meso-diaminopimelate (meso-DAP), a precursor of L-lysine and an essential component of the bacterial peptidoglycan. The protein is Diaminopimelate epimerase of Tolumonas auensis (strain DSM 9187 / NBRC 110442 / TA 4).